Reading from the N-terminus, the 238-residue chain is Uridylate kinase (238 aa).

12-15 lines the ATP pocket; it reads KLSG. Position 54 (glycine 54) interacts with UMP. Positions 55 and 59 each coordinate ATP. UMP is bound by residues aspartate 74 and 135–142; that span reads TGNPFFTT. ATP is bound by residues threonine 162, tyrosine 168, and aspartate 171.

The protein belongs to the UMP kinase family. In terms of assembly, homohexamer.

It localises to the cytoplasm. The enzyme catalyses UMP + ATP = UDP + ADP. It functions in the pathway pyrimidine metabolism; CTP biosynthesis via de novo pathway; UDP from UMP (UMPK route): step 1/1. Inhibited by UTP. Catalyzes the reversible phosphorylation of UMP to UDP. The protein is Uridylate kinase of Herminiimonas arsenicoxydans.